The following is a 432-amino-acid chain: Glutamyl-tRNA reductase (432 aa).

Substrate-binding positions include 50–53 (TCNR), Ser-110, 115–117 (ETQ), and Gln-121. Residue Cys-51 is the Nucleophile of the active site. An NADP(+)-binding site is contributed by 190-195 (GAGEMS).

This sequence belongs to the glutamyl-tRNA reductase family. In terms of assembly, homodimer.

The enzyme catalyses (S)-4-amino-5-oxopentanoate + tRNA(Glu) + NADP(+) = L-glutamyl-tRNA(Glu) + NADPH + H(+). It functions in the pathway porphyrin-containing compound metabolism; protoporphyrin-IX biosynthesis; 5-aminolevulinate from L-glutamyl-tRNA(Glu): step 1/2. Its function is as follows. Catalyzes the NADPH-dependent reduction of glutamyl-tRNA(Glu) to glutamate 1-semialdehyde (GSA). In Aliarcobacter butzleri (strain RM4018) (Arcobacter butzleri), this protein is Glutamyl-tRNA reductase.